An 873-amino-acid chain; its full sequence is F-box only protein 41 (873 aa).

Over residues 85–97 (ESTSFQGKEQATG) the composition is skewed to polar residues. 3 disordered regions span residues 85–110 (ESTS…HHHH), 163–193 (SSAC…SPAD), and 345–540 (SSSC…PSRS). The segment covering 168–178 (TPPPGPGPGPC) has biased composition (pro residues). Residues 179–192 (SGPSSASPASPSPA) are compositionally biased toward low complexity. A coiled-coil region spans residues 207–349 (ALEKLEVDRR…QLQVISSSCG (143 aa)). The segment covering 357-371 (GRGGGGSASGPGVRG) has biased composition (gly residues). Arginine 358 bears the Omega-N-methylarginine mark. Composition is skewed to polar residues over residues 384 to 414 (VPST…SSGC) and 442 to 456 (AQAT…QAPR). Serine 476 is modified (phosphoserine). Position 477 is a phosphothreonine (threonine 477). One can recognise an F-box domain in the interval 548–592 (ILKMRAALFCIFTYLDTRTLLHAAEVCRDWRFVARHPAVWTRVLL). Serine 760 is subject to Phosphoserine.

As to quaternary structure, directly interacts with SKP1 and CUL1.

Substrate-recognition component of the SCF (SKP1-CUL1-F-box protein)-type E3 ubiquitin ligase complex. The chain is F-box only protein 41 (Fbxo41) from Mus musculus (Mouse).